A 283-amino-acid chain; its full sequence is Probable aquaporin NIP4-2 (283 aa).

Residue methionine 1 is modified to N-acetylmethionine. A compositionally biased stretch (basic and acidic residues) spans 1 to 21; it reads MTSHGEEIEDEQISRIEKGNC. Residues 1–23 are disordered; that stretch reads MTSHGEEIEDEQISRIEKGNCKD. 2 helical membrane passes run 51 to 71 and 77 to 97; these read GTYFIIFSGCGVVVVNVLYGG and GICVTWGLIVMVMIYSTGHIS. Residues 102–104 carry the NPA 1 motif; it reads NPA. The next 3 helical transmembrane spans lie at 120–140, 161–181, and 189–209; these read VPLYIGAQLTGSLLASLTLRL, ALVAEIIISFLLMFVISGVAT, and LAGIAVGMTIILNVFVAGPIS. The NPA 2 signature appears at 214–216; that stretch reads NPA. The chain crosses the membrane as a helical span at residues 231-251; sequence IWVYIVGPFVGIFAGGFVYNF. Serine 267 is subject to Phosphoserine.

Belongs to the MIP/aquaporin (TC 1.A.8) family. NIP (TC 1.A.8.12) subfamily.

The protein resides in the membrane. Its function is as follows. Aquaporins facilitate the transport of water and small neutral solutes across cell membranes. The sequence is that of Probable aquaporin NIP4-2 (NIP4-2) from Arabidopsis thaliana (Mouse-ear cress).